The sequence spans 156 residues: MASYFDEHNCEPTVPEEQYRQNALLELARSLLSGMDIDLGAVDFTEWDQRLPPPASKKVVESLPKVTVTPEQADAALKCPVCLLEFEEGETVRQLPCEHLFHSACILPWLGKTNSCPLCRHELPTDSPDYEEFKQEKARRQQKEHRLECLHGAMYT.

The RING-type; atypical zinc finger occupies 79–120; that stretch reads CPVCLLEFEEGETVRQLPCEHLFHSACILPWLGKTNSCPLCR.

This sequence belongs to the RNF181 family.

It catalyses the reaction S-ubiquitinyl-[E2 ubiquitin-conjugating enzyme]-L-cysteine + [acceptor protein]-L-lysine = [E2 ubiquitin-conjugating enzyme]-L-cysteine + N(6)-ubiquitinyl-[acceptor protein]-L-lysine.. The protein operates within protein modification; protein ubiquitination. Its function is as follows. E3 ubiquitin-protein ligase which accepts ubiquitin from an E2 ubiquitin-conjugating enzyme in the form of a thioester and then directly transfers the ubiquitin to targeted substrates. Catalyzes monoubiquitination of 26S proteasome subunit PSMC2/RPT1. This Xenopus laevis (African clawed frog) protein is E3 ubiquitin-protein ligase RNF181 (rnf181).